We begin with the raw amino-acid sequence, 670 residues long: tRNA 5-methylaminomethyl-2-thiouridine biosynthesis bifunctional protein MnmC (670 aa).

Residues 1–242 (MTFSVQHAEI…KRECLSGLKI (242 aa)) form a tRNA (mnm(5)s(2)U34)-methyltransferase region. An FAD-dependent cmnm(5)s(2)U34 oxidoreductase region spans residues 269–670 (IGGGIASFCA…KKWLKGSKVE (402 aa)).

This sequence in the N-terminal section; belongs to the methyltransferase superfamily. tRNA (mnm(5)s(2)U34)-methyltransferase family. In the C-terminal section; belongs to the DAO family. The cofactor is FAD.

Its subcellular location is the cytoplasm. It catalyses the reaction 5-aminomethyl-2-thiouridine(34) in tRNA + S-adenosyl-L-methionine = 5-methylaminomethyl-2-thiouridine(34) in tRNA + S-adenosyl-L-homocysteine + H(+). Catalyzes the last two steps in the biosynthesis of 5-methylaminomethyl-2-thiouridine (mnm(5)s(2)U) at the wobble position (U34) in tRNA. Catalyzes the FAD-dependent demodification of cmnm(5)s(2)U34 to nm(5)s(2)U34, followed by the transfer of a methyl group from S-adenosyl-L-methionine to nm(5)s(2)U34, to form mnm(5)s(2)U34. The sequence is that of tRNA 5-methylaminomethyl-2-thiouridine biosynthesis bifunctional protein MnmC from Haemophilus influenzae (strain 86-028NP).